Here is a 715-residue protein sequence, read N- to C-terminus: Fatty acid oxidation complex subunit alpha (715 aa).

The interval 1 to 190 is enoyl-CoA hydratase; that stretch reads MTTTSAFMLN…KAGLVDDVVP (190 aa). Residues 306 to 715 are 3-hydroxyacyl-CoA dehydrogenase; it reads GPLNSVGILG…WTNGETDQGN (410 aa).

The protein in the N-terminal section; belongs to the enoyl-CoA hydratase/isomerase family. This sequence in the central section; belongs to the 3-hydroxyacyl-CoA dehydrogenase family. As to quaternary structure, heterotetramer of two alpha chains (FadJ) and two beta chains (FadI).

The protein resides in the cytoplasm. The enzyme catalyses a (3S)-3-hydroxyacyl-CoA = a (2E)-enoyl-CoA + H2O. The catalysed reaction is a 4-saturated-(3S)-3-hydroxyacyl-CoA = a (3E)-enoyl-CoA + H2O. It carries out the reaction a (3S)-3-hydroxyacyl-CoA + NAD(+) = a 3-oxoacyl-CoA + NADH + H(+). It catalyses the reaction (3S)-3-hydroxybutanoyl-CoA = (3R)-3-hydroxybutanoyl-CoA. It functions in the pathway lipid metabolism; fatty acid beta-oxidation. Catalyzes the formation of a hydroxyacyl-CoA by addition of water on enoyl-CoA. Also exhibits 3-hydroxyacyl-CoA epimerase and 3-hydroxyacyl-CoA dehydrogenase activities. The protein is Fatty acid oxidation complex subunit alpha of Salmonella gallinarum (strain 287/91 / NCTC 13346).